We begin with the raw amino-acid sequence, 122 residues long: MGKLDKKQLIESLKEMTIVEIDEIIKAVEEAFGVTATPIVAAGAAGATQEAASEVSVKVTGYADNAKLAVLKLYREITGVGLMEAKTAVEKLPCVVKQDIKPEEAEELKKRFVEVGATVEVK.

This sequence belongs to the bacterial ribosomal protein bL12 family. As to quaternary structure, homodimer. Part of the ribosomal stalk of the 50S ribosomal subunit. Forms a multimeric L10(L12)X complex, where L10 forms an elongated spine to which 2 to 4 L12 dimers bind in a sequential fashion. Binds GTP-bound translation factors.

In terms of biological role, forms part of the ribosomal stalk which helps the ribosome interact with GTP-bound translation factors. Is thus essential for accurate translation. The polypeptide is Large ribosomal subunit protein bL12 (Mycoplasma genitalium (strain ATCC 33530 / DSM 19775 / NCTC 10195 / G37) (Mycoplasmoides genitalium)).